A 648-amino-acid chain; its full sequence is ABC transporter G family member 14 (648 aa).

The region spanning 53–304 (LKFEEVVYKV…FSSLGFSTSL (252 aa)) is the ABC transporter domain. Position 99–106 (99–106 (GPSGSGKT)) interacts with ATP. Asn346 carries N-linked (GlcNAc...) asparagine glycosylation. An ABC transmembrane type-2 domain is found at 384–590 (YQFTVLLQRG…CYKLLLGIQY (207 aa)). Helical transmembrane passes span 405–425 (LRIF…WHTP), 435–455 (LLFF…VFTF), 485–505 (LPLE…MGGL), 512–532 (FILS…LGLA), 543–562 (ATTL…GYYV), 569–591 (IVWL…IQYT), and 620–640 (LWID…MAYM).

The protein belongs to the ABC transporter superfamily. ABCG family. Eye pigment precursor importer (TC 3.A.1.204) subfamily. In terms of assembly, forms heterodimers with ABCG11. As to expression, accumulates primarily in the pericycle and stelar cells of roots. Expressed in leaves, stems, flowers and siliques, and, at low levels, in roots. Accumulates in the phloem.

It is found in the cell membrane. Its function is as follows. Positive regulator of plant growth which acts as an efflux pump involved in the major root-to-shoot (acropetal) long-distance cytokinin (CK) transport via the xylem sap. Together with ABCG9 and ABCG11, required for vascular development by regulating lipid/sterol homeostasis. Involved in CK-dependent responses to oxidative stress such as hydrogen peroxide H(2)O(2). Functionally, (Microbial infection) Required for SNC1-mediated defense response against the virulent pathogen Pseudomonas syringae pv. tomato DC3000 by promoting the accumulation of trans-zeatin (tZ)-type cytokinins (CK) in the shoot. The protein is ABC transporter G family member 14 of Arabidopsis thaliana (Mouse-ear cress).